The sequence spans 284 residues: Formamidopyrimidine-DNA glycosylase (284 aa).

Residue Pro-2 is the Schiff-base intermediate with DNA of the active site. Residue Glu-3 is the Proton donor of the active site. Residue Lys-61 is the Proton donor; for beta-elimination activity of the active site. 3 residues coordinate DNA: His-95, Arg-114, and Arg-159. The segment at 244–278 (WVYGRKGQPCRVCNTPIERIRLAGRSTHFCPTCQR) adopts an FPG-type zinc-finger fold. The active-site Proton donor; for delta-elimination activity is the Arg-268.

This sequence belongs to the FPG family. As to quaternary structure, monomer. The cofactor is Zn(2+).

The enzyme catalyses Hydrolysis of DNA containing ring-opened 7-methylguanine residues, releasing 2,6-diamino-4-hydroxy-5-(N-methyl)formamidopyrimidine.. The catalysed reaction is 2'-deoxyribonucleotide-(2'-deoxyribose 5'-phosphate)-2'-deoxyribonucleotide-DNA = a 3'-end 2'-deoxyribonucleotide-(2,3-dehydro-2,3-deoxyribose 5'-phosphate)-DNA + a 5'-end 5'-phospho-2'-deoxyribonucleoside-DNA + H(+). In terms of biological role, involved in base excision repair of DNA damaged by oxidation or by mutagenic agents. Acts as a DNA glycosylase that recognizes and removes damaged bases. Has a preference for oxidized purines, such as 7,8-dihydro-8-oxoguanine (8-oxoG). Has AP (apurinic/apyrimidinic) lyase activity and introduces nicks in the DNA strand. Cleaves the DNA backbone by beta-delta elimination to generate a single-strand break at the site of the removed base with both 3'- and 5'-phosphates. This is Formamidopyrimidine-DNA glycosylase from Gloeobacter violaceus (strain ATCC 29082 / PCC 7421).